The primary structure comprises 307 residues: Shikimate kinase 2, chloroplastic (307 aa).

The transit peptide at 1–60 (MEARAGLAMQSRAAVGVGAGPGVGRRGRAVIRVGKRPTAASLRVGGPAGPAAAKPLAPLY) directs the protein to the chloroplast. 101-108 (GMMGSGKS) contacts ATP. Residue Ser-108 participates in Mg(2+) binding. Residues Asp-126, Arg-151, and Gly-173 each coordinate substrate. Arg-212 contacts ATP. The segment at 285–307 (HSTSSGPVGDLIVDSQNRRTKAL) is disordered.

Belongs to the shikimate kinase family. The cofactor is Mg(2+). As to expression, expressed in panicles.

The protein resides in the plastid. It is found in the chloroplast. The enzyme catalyses shikimate + ATP = 3-phosphoshikimate + ADP + H(+). It participates in metabolic intermediate biosynthesis; chorismate biosynthesis; chorismate from D-erythrose 4-phosphate and phosphoenolpyruvate: step 5/7. Its function is as follows. Catalyzes the specific phosphorylation of the 3-hydroxyl group of shikimic acid using ATP as a cosubstrate. The protein is Shikimate kinase 2, chloroplastic (SK2) of Oryza sativa subsp. japonica (Rice).